The primary structure comprises 380 residues: MAPNLRKSHPLLKMINKSLIDLPTPPNISAWWNFGSLLGICLITQILTGLLLAMHYTADTTLAFSSIAHTCRNVQYGWLIRNLHANGASFFFICIYFHIGRGLYYGSYLYKETWNTGIILLLTLMATAFVGYVLPWGQMSFWGATVITNLFSAIPYVGQTLVEWAWGGFSVDNPTLTRFFALHFLLPFMITGLTLIHLTFLHESGSNNPLGIVANSDKIPFHPYYSTKDILGFALMLLPLTTLALFSPNLLGDPENFTPANPLVTPPHIKPEWYFLFAYAILRSIPNKLGGVLALAASVLILFLSPLLHKSKQRTMAFRPLSQLLFWTLVANLLILTWIGSQPVEHPFIIIGQLASTTYFIILLILFPITSALENKMLNF.

Helical transmembrane passes span 34–54, 78–99, 114–134, and 179–199; these read FGSLLGICLITQILTGLLLAM, WLIRNLHANGASFFFICIYFHI, WNTGIILLLTLMATAFVGYVL, and FFALHFLLPFMITGLTLIHLT. Heme b is bound by residues His84 and His98. Residues His183 and His197 each coordinate heme b. Residue His202 participates in a ubiquinone binding. 4 helical membrane passes run 227–247, 289–309, 321–341, and 348–368; these read TKDILGFALMLLPLTTLALFS, LGGVLALAASVLILFLSPLLH, LSQLLFWTLVANLLILTWIGS, and FIIIGQLASTTYFIILLILFP.

This sequence belongs to the cytochrome b family. In terms of assembly, the cytochrome bc1 complex contains 11 subunits: 3 respiratory subunits (MT-CYB, CYC1 and UQCRFS1), 2 core proteins (UQCRC1 and UQCRC2) and 6 low-molecular weight proteins (UQCRH/QCR6, UQCRB/QCR7, UQCRQ/QCR8, UQCR10/QCR9, UQCR11/QCR10 and a cleavage product of UQCRFS1). This cytochrome bc1 complex then forms a dimer. It depends on heme b as a cofactor.

Its subcellular location is the mitochondrion inner membrane. Its function is as follows. Component of the ubiquinol-cytochrome c reductase complex (complex III or cytochrome b-c1 complex) that is part of the mitochondrial respiratory chain. The b-c1 complex mediates electron transfer from ubiquinol to cytochrome c. Contributes to the generation of a proton gradient across the mitochondrial membrane that is then used for ATP synthesis. In Pygoscelis papua (Gentoo penguin), this protein is Cytochrome b (MT-CYB).